A 664-amino-acid chain; its full sequence is SPARC-like protein 1 (664 aa).

Positions 1-16 are cleaved as a signal peptide; the sequence is MKTGLFFLCLLGTAAA. The interval 25-34 is O-glycosylated at one additional site; it reads SDHSKPTAET. Residues 28 to 360 form a disordered region; that stretch reads SKPTAETVAP…DGPRHSASDD (333 aa). T31 and T40 each carry an O-linked (GalNAc...) threonine glycan. A glycan (O-linked (GalNAc...) serine) is linked at S44. Basic and acidic residues predominate over residues 62 to 84; it reads DDSHHKAEKSSVLKSKEESHEQS. A phosphoserine mark is found at S76, S84, and S92. Residues 85–94 show a composition bias toward polar residues; sequence AEQGKSSSQE. Positions 96–105 are enriched in basic and acidic residues; that stretch reads GLKDQEDSDG. T116 carries an O-linked (GalNAc...) threonine glycan. The segment covering 120–136 has biased composition (basic and acidic residues); the sequence is LDIKEDMSEPQEKKLSE. Residues 146 to 156 are compositionally biased toward polar residues; the sequence is SSFTDSNQQES. N169 is a glycosylation site (N-linked (GlcNAc...) asparagine). A compositionally biased stretch (basic residues) spans 170–180; that stretch reads YSHHQLNRSSK. A Phosphoserine modification is found at S171. N-linked (GlcNAc...) asparagine glycosylation is found at N176 and N196. Over residues 188–199 the composition is skewed to polar residues; that stretch reads QGNQEQDPNISN. Basic and acidic residues predominate over residues 216-235; it reads DNQERKTELPREHANSKQEE. Acidic residues-rich tracts occupy residues 236–248 and 259–280; these read DNTQ…EESD and DEFD…EEEN. At S272 the chain carries Phosphoserine. N280 carries an N-linked (GlcNAc...) asparagine glycan. Residues 306–316 are compositionally biased toward basic and acidic residues; the sequence is SNHKETEEKTV. O-linked (GalNAc...) threonine glycosylation is present at T331. The segment covering 339–349 has biased composition (acidic residues); it reads DDGDDDGDDGG. Phosphoserine is present on residues S358 and S365. The disordered stretch occupies residues 388–426; it reads EKVHENENIGTTEPGEHQEAKKAENSSNEEETSSEGNMR. T398 carries O-linked (GalNAc...) threonine glycosylation. The segment covering 401 to 411 has biased composition (basic and acidic residues); sequence PGEHQEAKKAE. N412 is a glycosylation site (N-linked (GlcNAc...) asparagine). S420 carries the post-translational modification Phosphoserine. One can recognise a Follistatin-like domain in the interval 432–454; sequence SCMSFQCKRGHICKADQQGKPHC. 7 cysteine pairs are disulfide-bonded: C433/C444, C438/C454, C456/C490, C462/C483, C472/C509, C515/C626, and C634/C650. A Kazal-like domain is found at 450 to 511; that stretch reads GKPHCVCQDP…QLDYFGACKS (62 aa). A glycan (N-linked (GlcNAc...) asparagine) is linked at N476. The region spanning 622–657 is the EF-hand domain; the sequence is PMEHCITRFFEECDPNKDKHITLKEWGHCFGIKEED. 5 residues coordinate Ca(2+): D635, N637, D639, H641, and E646.

The protein belongs to the SPARC family. In terms of processing, N- and O-glycosylated. O-glycosylated with a core 1 or possibly core 8 glycan. In terms of tissue distribution, highly expressed in lymph node, brain, heart, lung, skeletal muscle, ovary, small intestine, and colon, with lower levels in placenta, pancreas, testis, spleen, and thymus, and no expression in kidney, liver, and peripheral blood leukocytes.

The protein localises to the secreted. Its subcellular location is the extracellular space. It is found in the extracellular matrix. The polypeptide is SPARC-like protein 1 (SPARCL1) (Homo sapiens (Human)).